Reading from the N-terminus, the 540-residue chain is Putative actin-fragmin kinase DDB_G0287957 (540 aa).

A coiled-coil region spans residues Lys27–Asn68. Disordered stretches follow at residues Ile37–Asn70 and Asn317–Cys341.

The protein belongs to the protein kinase superfamily. AFK Ser/Thr protein kinase family.

This is Putative actin-fragmin kinase DDB_G0287957 from Dictyostelium discoideum (Social amoeba).